The primary structure comprises 76 residues: Small ribosomal subunit protein bS18 (76 aa).

Belongs to the bacterial ribosomal protein bS18 family. As to quaternary structure, part of the 30S ribosomal subunit. Forms a tight heterodimer with protein bS6.

In terms of biological role, binds as a heterodimer with protein bS6 to the central domain of the 16S rRNA, where it helps stabilize the platform of the 30S subunit. This is Small ribosomal subunit protein bS18 from Carboxydothermus hydrogenoformans (strain ATCC BAA-161 / DSM 6008 / Z-2901).